A 1889-amino-acid polypeptide reads, in one-letter code: Treslin (1889 aa).

Phosphoserine occurs at positions 295, 599, 820, 861, 919, 934, 1002, 1027, and 1078. Residues 812 to 832 (DSMSQESMSPPPSSSTHRSVS) show a composition bias toward low complexity. The tract at residues 812–836 (DSMSQESMSPPPSSSTHRSVSAITE) is disordered. The segment at 979–1063 (RLLHRQIKGR…RENFPVQSIQ (85 aa)) is disordered. Residues 1020 to 1050 (LSFSRTNSGSFYSVSQPKSRSVQRIHSSQQE) show a composition bias toward polar residues. 6 disordered regions span residues 1098 to 1421 (EIST…SQFS), 1471 to 1508 (LPGE…SSSE), 1520 to 1543 (GKQR…SPQT), 1630 to 1714 (SCTP…SLEQ), 1730 to 1751 (VCQL…ETSW), and 1841 to 1875 (QGRT…TLSR). Positions 1127–1179 (TAQTLLYTPERLQNSPTEMTSAEGTISEATIKTPSSHGYNSPFASKVTSQKTV) are enriched in polar residues. Residue Thr-1134 is modified to Phosphothreonine. The residue at position 1141 (Ser-1141) is a Phosphoserine. Over residues 1187–1197 (SPPLTKLPSTP) the composition is skewed to low complexity. The span at 1203–1219 (QPPQCSSDCTWPHSVNS) shows a compositional bias: polar residues. A compositionally biased stretch (low complexity) spans 1339-1351 (TSPSVTSSVSCPV). Residues 1373 to 1382 (KLRRSCRKKS) show a composition bias toward basic residues. Ser-1406 bears the Phosphoserine mark. The span at 1496–1508 (LVPAPSSVSSSSE) shows a compositional bias: low complexity. Composition is skewed to polar residues over residues 1525–1543 (DAAQ…SPQT) and 1652–1662 (WTPSPKQSGKT). The span at 1705 to 1714 (PEGKERSLEQ) shows a compositional bias: basic and acidic residues.

The protein belongs to the treslin family. In terms of assembly, interacts with TOPBP1 (via BRCT domains); interaction takes place in a CDK2-dependent manner. Component of the replisome complex composed of at least DONSON, MCM2, MCM7, PCNA and TICRR.

Its subcellular location is the nucleus. Regulator of DNA replication and S/M and G2/M checkpoints. Regulates the triggering of DNA replication initiation via its interaction with TOPBP1 by participating in CDK2-mediated loading of CDC45L onto replication origins. Required for the transition from pre-replication complex (pre-RC) to pre-initiation complex (pre-IC). Required to prevent mitotic entry after treatment with ionizing radiation. This Mus musculus (Mouse) protein is Treslin (Ticrr).